Consider the following 1025-residue polypeptide: Serine/threonine-protein kinase TAO2 (1025 aa).

The 254-residue stretch at 28-281 (FADLREIGHG…SDMLLKHRFL (254 aa)) folds into the Protein kinase domain. ATP contacts are provided by residues 34 to 42 (IGHGSFGAV) and Lys57. Asp151 acts as the Proton acceptor in catalysis. The span at 349–373 (ESSQSVPSMSISASSQSSSVNSLAD) shows a compositional bias: low complexity. The tract at residues 349–377 (ESSQSVPSMSISASSQSSSVNSLADASDD) is disordered. Coiled-coil stretches lie at residues 457–650 (SALR…ECAM) and 755–876 (ILKR…EIEA). 2 disordered regions span residues 899 to 930 (FNQGYQAPPPGWPSRPVPRSGSHWSHGVQNTG) and 945 to 1025 (SASW…LSYS). Over residues 905-914 (APPPGWPSRP) the composition is skewed to pro residues. Positions 947 to 986 (SWGLHPPGSSSSLSALPSSSSSSSSSPSSSSGGRPGLLLL) are enriched in low complexity. A compositionally biased stretch (polar residues) spans 1007-1025 (SRSTSVTSQLSNGSHLSYS).

The protein belongs to the protein kinase superfamily. STE Ser/Thr protein kinase family. STE20 subfamily. It depends on Mg(2+) as a cofactor.

It catalyses the reaction L-seryl-[protein] + ATP = O-phospho-L-seryl-[protein] + ADP + H(+). The catalysed reaction is L-threonyl-[protein] + ATP = O-phospho-L-threonyl-[protein] + ADP + H(+). In terms of biological role, serine/threonine-protein kinase involved in different processes such as apoptotic morphological changes, MAPK8/JNK and MAPK14/p38 MAPK signaling pathway. Functionally, activates the JNK MAP kinase pathway. In Xenopus laevis (African clawed frog), this protein is Serine/threonine-protein kinase TAO2 (taok2).